The chain runs to 78 residues: RNA-binding protein Hfq (78 aa).

Residues 10–69 (DPFLNALRKEHVPVSIYLVNGIKLQGHIESFDQYVVLLRNTVTQMVYKHAISTVVPARAV) form the Sm domain.

The protein belongs to the Hfq family. As to quaternary structure, homohexamer.

RNA chaperone that binds small regulatory RNA (sRNAs) and mRNAs to facilitate mRNA translational regulation in response to envelope stress, environmental stress and changes in metabolite concentrations. Also binds with high specificity to tRNAs. The protein is RNA-binding protein Hfq of Janthinobacterium sp. (strain Marseille) (Minibacterium massiliensis).